The sequence spans 485 residues: Aspartyl/glutamyl-tRNA(Asn/Gln) amidotransferase subunit B (485 aa).

Belongs to the GatB/GatE family. GatB subfamily. As to quaternary structure, heterotrimer of A, B and C subunits.

It catalyses the reaction L-glutamyl-tRNA(Gln) + L-glutamine + ATP + H2O = L-glutaminyl-tRNA(Gln) + L-glutamate + ADP + phosphate + H(+). The catalysed reaction is L-aspartyl-tRNA(Asn) + L-glutamine + ATP + H2O = L-asparaginyl-tRNA(Asn) + L-glutamate + ADP + phosphate + 2 H(+). Functionally, allows the formation of correctly charged Asn-tRNA(Asn) or Gln-tRNA(Gln) through the transamidation of misacylated Asp-tRNA(Asn) or Glu-tRNA(Gln) in organisms which lack either or both of asparaginyl-tRNA or glutaminyl-tRNA synthetases. The reaction takes place in the presence of glutamine and ATP through an activated phospho-Asp-tRNA(Asn) or phospho-Glu-tRNA(Gln). The polypeptide is Aspartyl/glutamyl-tRNA(Asn/Gln) amidotransferase subunit B (Anaplasma marginale (strain Florida)).